The chain runs to 183 residues: Gamma-crystallin N (183 aa).

Beta/gamma crystallin 'Greek key' domains follow at residues 6–46, 47–89, 95–136, and 138–180; these read GKIT…RVES, GAWV…RPVG, FRID…KVYG, and GAWV…RRVL.

This sequence belongs to the beta/gamma-crystallin family. In terms of assembly, monomer. Detected in the auditory hindbrain where it is highly expressed in the medial nucleus of the trapezoid body, but also present in other nuclei of the superior olivary complex.

Its function is as follows. Crystallins are the dominant structural components of the vertebrate eye lens. Also plays an important role for integrity and function of auditory nuclei. This chain is Gamma-crystallin N, found in Rattus norvegicus (Rat).